Here is a 126-residue protein sequence, read N- to C-terminus: Ribonuclease VapC23 (126 aa).

The 117-residue stretch at 2–118 (IFVDTNVFMY…GVTRIKTFDH (117 aa)) folds into the PINc domain. 2 residues coordinate Mg(2+): aspartate 5 and aspartate 98.

The protein belongs to the PINc/VapC protein family. It depends on Mg(2+) as a cofactor.

In terms of biological role, toxic component of a type II toxin-antitoxin (TA) system. An RNase. The cognate antitoxin is VapB23. The polypeptide is Ribonuclease VapC23 (Mycobacterium tuberculosis (strain CDC 1551 / Oshkosh)).